We begin with the raw amino-acid sequence, 895 residues long: MSGFFRKVGDSDSESDISSSEEELSELESGDEQPKTTQPAASRSRFLKGSDDDSDSDDDDSDDDDQDSLDSDDDNGERRTDGKKAPTSRFMKGAADSDDSDSEEEVKKVVKSAKDKRIDDMQTIVNHIESAQKSSDWTSINKDFDNLMRSIERQRTLNEQIPAFFYKAISQLDQYLNESAAKEKDAKKKMKAPVAKAMNGMKQKLKKVIKENDETIARYRSDPEGFEAAAEAALSAAAAPADAETAIAKGKKERLAAALDSDANDDFQTVGRGGRTETFTSEGLFKSLTAIMEARGKKSTDKNEQIRKLHDLSGVADSPYKKIRVILALVAARFDYNASATAYMPVEMWDSARKEINEIVALLGKNRSYVVREETEDYDDEVERVPGQNGEKDVVAVRGSIISFVDRLDDEFTKSLQNIDPHTTEYVDRLCDEKKLYETIVLAQGYFESQSETEALSRCTMRRLDHVYAKQDVIIKALESTLGEAAKTFESKLFPSAVRVAEQDGPAVLVRALCTYLYQARGVQAERPRTRAVLCHIYFHALHADYHVARDMFLMSHLQDAIQLADVATQILYNRVVVQIGICAFRNGLIKESQVALQEIFATGRVKELLAQGVQKQNQFSTVTPEQEKLERQRQLPFHMHINLELLECIYLISSMLLEVPNMALAGNDPELRKRVISRPFRRMLDYTDRQVFSGPPENTRDHIMQACKALQNGDCKACIELISDIKIWKLMPGSQEVKLMLAKRIQEVGLRTYLFSYSAYYESVSLSHLAATFDVEETVVKAMVSKMIYNDELAASLDPSANVVSFHRLELTKVQQLAATLAEKANSMLEQNERLLDAKLGEGKEQRSGAGGERGDREGGQPGGRRERRGGSAARGRGRGRGRAQQFQALGQKV.

The disordered stretch occupies residues 1-108; it reads MSGFFRKVGD…DSDSEEEVKK (108 aa). 2 stretches are compositionally biased toward acidic residues: residues 11–31 and 52–75; these read SDSE…ESGD and DDSD…DDDN. The PCI domain maps to 638 to 812; that stretch reads FHMHINLELL…NVVSFHRLEL (175 aa). Residues 838–860 are compositionally biased toward basic and acidic residues; the sequence is DAKLGEGKEQRSGAGGERGDREG. The segment at 838–895 is disordered; sequence DAKLGEGKEQRSGAGGERGDREGGQPGGRRERRGGSAARGRGRGRGRAQQFQALGQKV. Low complexity predominate over residues 884-895; sequence RAQQFQALGQKV.

This sequence belongs to the eIF-3 subunit C family. In terms of assembly, component of the eukaryotic translation initiation factor 3 (eIF-3) complex.

It localises to the cytoplasm. In terms of biological role, component of the eukaryotic translation initiation factor 3 (eIF-3) complex, which is involved in protein synthesis of a specialized repertoire of mRNAs and, together with other initiation factors, stimulates binding of mRNA and methionyl-tRNAi to the 40S ribosome. The eIF-3 complex specifically targets and initiates translation of a subset of mRNAs involved in cell proliferation. This chain is Eukaryotic translation initiation factor 3 subunit C, found in Mycosarcoma maydis (Corn smut fungus).